Consider the following 449-residue polypeptide: Naphthalene 1,2-dioxygenase system, large oxygenase component (449 aa).

The 99-residue stretch at 39 to 137 folds into the Rieske domain; sequence WLFLTHDSLI…LNKKCLGLKE (99 aa). Positions 81, 83, 101, and 104 each coordinate [2Fe-2S] cluster. Residues H208, H213, and D362 each coordinate Fe cation.

The protein belongs to the bacterial ring-hydroxylating dioxygenase alpha subunit family. The naphthalene dioxygenase (NDO) multicomponent enzyme system is composed of an electron transfer component and a dioxygenase component (iron sulfur protein (ISP)). The electron transfer component is composed of a ferredoxin reductase (NdoR) and a ferredoxin (NdoA), and the dioxygenase component is formed of a heterohexamer (trimer of heterodimers) of three large alpha subunits (NdoB) and three small beta subunits (NdoC). It depends on [2Fe-2S] cluster as a cofactor. Fe(2+) is required as a cofactor.

It catalyses the reaction naphthalene + NADH + O2 + H(+) = (1R,2S)-1,2-dihydronaphthalene-1,2-diol + NAD(+). It functions in the pathway aromatic compound metabolism; naphthalene degradation. Its function is as follows. Component of the naphthalene dioxygenase (NDO) multicomponent enzyme system which catalyzes the incorporation of both atoms of molecular oxygen into naphthalene to form cis-(1R,2S)-dihydroxy-1,2-dihydronaphthalene. The alpha subunit has a catalytic role in the holoenzyme. Also able to catalyze the cis-dihydroxylation of biphenyl and phenanthrene. The sequence is that of Naphthalene 1,2-dioxygenase system, large oxygenase component from Pseudomonas putida (Arthrobacter siderocapsulatus).